We begin with the raw amino-acid sequence, 528 residues long: uncharacterized protein (528 aa).

The interval 1–51 (MEHPKRPTPKNEALHIDASGRGESSFSVHRSHSGGHEPFAPSPGSSIGASV) is disordered. 2 repeat units span residues 185 to 213 (EQEEEYISNSLLKKIQQLNQDKDYLVKKY) and 285 to 313 (EQEQELLINTLGKRMSQMNEEKRKLQQAL). Residues 185-313 (EQEEEYISNS…EEKRKLQQAL (129 aa)) are 2 X 29 AA repeats. Disordered regions lie at residues 467–497 (RAHGSSPPTVVVQPSTSRAGSNSTANINNDT) and 509–528 (TVHPTQRATPARNERPDSHY). A compositionally biased stretch (polar residues) spans 472–496 (SPPTVVVQPSTSRAGSNSTANINND).

This is an uncharacterized protein from Caenorhabditis elegans.